Here is a 154-residue protein sequence, read N- to C-terminus: 6,7-dimethyl-8-ribityllumazine synthase (154 aa).

5-amino-6-(D-ribitylamino)uracil is bound by residues F15, 47–49 (TFD), and 71–73 (AVI). 76 to 77 (ET) lines the (2S)-2-hydroxy-3-oxobutyl phosphate pocket. The Proton donor role is filled by H79. A 5-amino-6-(D-ribitylamino)uracil-binding site is contributed by L104. R119 is a (2S)-2-hydroxy-3-oxobutyl phosphate binding site.

This sequence belongs to the DMRL synthase family.

It catalyses the reaction (2S)-2-hydroxy-3-oxobutyl phosphate + 5-amino-6-(D-ribitylamino)uracil = 6,7-dimethyl-8-(1-D-ribityl)lumazine + phosphate + 2 H2O + H(+). It participates in cofactor biosynthesis; riboflavin biosynthesis; riboflavin from 2-hydroxy-3-oxobutyl phosphate and 5-amino-6-(D-ribitylamino)uracil: step 1/2. Catalyzes the formation of 6,7-dimethyl-8-ribityllumazine by condensation of 5-amino-6-(D-ribitylamino)uracil with 3,4-dihydroxy-2-butanone 4-phosphate. This is the penultimate step in the biosynthesis of riboflavin. In Saccharolobus islandicus (strain M.16.27) (Sulfolobus islandicus), this protein is 6,7-dimethyl-8-ribityllumazine synthase.